Reading from the N-terminus, the 815-residue chain is Leucine--tRNA ligase (815 aa).

The short motif at 42-52 (PYPSGRLHMGH) is the 'HIGH' region element. A 'KMSKS' region motif is present at residues 574 to 578 (KMSKS). Lysine 577 is a binding site for ATP.

The protein belongs to the class-I aminoacyl-tRNA synthetase family.

It localises to the cytoplasm. The enzyme catalyses tRNA(Leu) + L-leucine + ATP = L-leucyl-tRNA(Leu) + AMP + diphosphate. This Marinomonas sp. (strain MWYL1) protein is Leucine--tRNA ligase.